A 187-amino-acid chain; its full sequence is Large ribosomal subunit protein uL22 (187 aa).

Composition is skewed to basic and acidic residues over residues 158–168 (TKATDESEQAK) and 178–187 (RQKEKMMRNE). Positions 158–187 (TKATDESEQAKKKLSKKKLQRQKEKMMRNE) are disordered.

The protein belongs to the universal ribosomal protein uL22 family.

The polypeptide is Large ribosomal subunit protein uL22 (RpL17) (Anopheles gambiae (African malaria mosquito)).